The following is a 223-amino-acid chain: N-terminal Xaa-Pro-Lys N-methyltransferase 1-B (223 aa).

S-adenosyl-L-methionine-binding positions include Gly-69, Arg-74, 91-93 (DVT), 119-120 (LQ), and Gln-135.

Belongs to the methyltransferase superfamily. NTM1 family.

Its subcellular location is the nucleus. The catalysed reaction is N-terminal L-alanyl-L-prolyl-L-lysyl-[protein] + 3 S-adenosyl-L-methionine = N-terminal N,N,N-trimethyl-L-alanyl-L-prolyl-L-lysyl-[protein] + 3 S-adenosyl-L-homocysteine + 3 H(+). The enzyme catalyses N-terminal L-seryl-L-prolyl-L-lysyl-[protein] + 3 S-adenosyl-L-methionine = N-terminal N,N,N-trimethyl-L-seryl-L-prolyl-L-lysyl-[protein] + 3 S-adenosyl-L-homocysteine + 3 H(+). It catalyses the reaction N-terminal L-prolyl-L-prolyl-L-lysyl-[protein] + 2 S-adenosyl-L-methionine = N-terminal N,N-dimethyl-L-prolyl-L-prolyl-L-lysyl-[protein] + 2 S-adenosyl-L-homocysteine + 2 H(+). Distributive alpha-N-methyltransferase that methylates the N-terminus of target proteins containing the N-terminal motif [Ala/Gly/Pro/Ser]-Pro-Lys when the initiator Met is cleaved. Specifically catalyzes mono-, di- or tri-methylation of the exposed alpha-amino group of the Ala, Gly or Ser residue in the [Ala/Gly/Ser]-Pro-Lys motif and mono- or di-methylation of Pro in the Pro-Pro-Lys motif. Required during mitosis for normal bipolar spindle formation and chromosome segregation via its action on target proteins. The chain is N-terminal Xaa-Pro-Lys N-methyltransferase 1-B (ntmt1-b) from Xenopus laevis (African clawed frog).